A 1518-amino-acid chain; its full sequence is MAAVGSGGYARNDAGEKLPSVMAGVPARRGQSSPPPAPPICLRRRTRLSTASEETVQNRVSLEKVLGITAQNSSGLTCDPGTGHVAYLAGCVVVILDPKENKQQHIFNTARKSLSALAFSPDGKYIVTGENGHRPAVRIWDVEEKNQVAEMLGHKYGVACVAFSPNMKHIVSMGYQHDMVLNVWDWKKDIVVASNKVSCRVIALSFSEDSSYFVTVGNRHVRFWFLEVSTETKVTSTVPLVGRSGILGELHNNIFCGVACGRGRMAGSTFCVSYSGLLCQFNEKRVLEKWINLKVSLSSCLCVSQELIFCGCTDGIVRIFQAHSLHYLANLPKPHYLGVDVAQGLEPSFLFHRKAEAVYPDTVALTFDPIHQWLSCVYKDHSIYIWDVKDINRVGKVWSELFHSSYVWNVEVYPEFEDQRACLPSGSFLTCSSDNTIRFWNLDSSPDSHWQKNIFSNTLLKVVYVENDIQHLQDMSHFPDRGSENGTPMDVKAGVRVMQVSPDGQHLASGDRSGNLRIHELHFMDELVKVEAHDAEVLCLEYSKPETGLTLLASASRDRLIHVLNVEKNYNLEQTLDDHSSSITAIKFAGNRDIQMISCGADKSIYFRSAQQGSDGLHFVRTHHVAEKTTLYDMDIDITQKYVAVACQDRNVRVYNTVNGKQKKCYKGSQGDEGSLLKVHVDPSGTFLATSCSDKSISVIDFYSGECIAKMFGHSEIITSMKFTYDCHHLITVSGDSCVFIWHLGPEITNCMKQHLLEIDHRQQQQHTNDKKRSGHPRQDTYVSTPSEIHSLSPGEQTEDDLEEECEPEEMLKTPSKDSLDPDPRCLLTNGKLPLWAKRLLGDDDVADGLAFHAKRSYQPHGRWAERAGQEPLKTILDAQDLDCYFTPMKPESLENSILDSLEPQSLASLLSESESPQEAGRGHPSFLPQQKESSEASELILYSLEAEVTVTGTDSQYCRKEVEAGPGDQQGDSYLRVSSDSPKDQSPPEDSGESEADLECSFAAIHSPAPPPDPAPRFATSLPHFPGCAGPTEDELSLPEGPSVPSSSLPQTPEQEKFLRHHFETLTESPCRALGDVEASEAEDHFFNPRLSISTQFLSSLQKASRFTHTFPPRATQCLVKSPEVKLMDRGGSQPRAGTGYASPDRTHVLAAGKAEETLEAWRPPPPCLTSLASCVPASSVLPTDRNLPTPTSAPTPGLAQGVHAPSTCSYMEATASSRARISRSISLGDSEGPIVATLAQPLRRPSSVGELASLGQELQAITTATTPSLDSEGQEPALRSWGNHEARANLRLTLSSACDGLLQPPVDTQPGVTVPAVSFPAPSPVEESALRLHGSAFRPSLPAPESPGLPAHPSNPQLPEARPGIPGGTASLLEPTSGALGLLQGSPARWSEPWVPVEALPPSPLELSRVGNILHRLQTTFQEALDLYRVLVSSGQVDTGQQQARTELVSTFLWIHSQLEAECLVGTSVAPAQALPSPGPPSPPTLYPLASPDLQALLEHYSELLVQAVRRKARGH.

Ala-2 carries the N-acetylalanine modification. Residue Ser-33 is modified to Phosphoserine. Residue Thr-46 is modified to Phosphothreonine. Ser-49 is subject to Phosphoserine. Thr-50 carries the post-translational modification Phosphothreonine. Ser-52 carries the post-translational modification Phosphoserine. 12 WD repeats span residues 109–150 (TARK…QVAE), 153–194 (GHKY…VVAS), 196–234 (KVSC…ETKV), 291–330 (INLK…YLAN), 357–396 (AVYP…RVGK), 402–450 (FHSS…DSHW), 490–529 (DVKA…ELVK), 532–574 (AHDA…NLEQ), 578–618 (DHSS…DGLH), 626–665 (AEKT…QKKC), 671–713 (GDEG…KMFG), and 714–752 (HSEI…TNCM). A Phosphoserine modification is found at Ser-501. Basic and acidic residues predominate over residues 762 to 772 (RQQQQHTNDKK). Disordered stretches follow at residues 762–824 (RQQQ…DPDP) and 908–935 (ASLL…KESS). Residues 781–790 (TYVSTPSEIH) are compositionally biased toward polar residues. Residues 797-809 (QTEDDLEEECEPE) are compositionally biased toward acidic residues. Residues 803–846 (EEECEPEEMLKTPSKDSLDPDPRCLLTNGKLPLWAKRLLGDDDV) form a WD 13 repeat. Basic and acidic residues predominate over residues 810-824 (EMLKTPSKDSLDPDP). Over residues 908 to 920 (ASLLSESESPQEA) the composition is skewed to low complexity. Ser-944 carries the phosphoserine modification. The segment at 962–1055 (EVEAGPGDQQ…PSSSLPQTPE (94 aa)) is disordered. Composition is skewed to polar residues over residues 971 to 981 (QGDSYLRVSSD) and 1045 to 1054 (VPSSSLPQTP). A Phosphothreonine modification is found at Thr-1053. Phosphoserine occurs at positions 1070, 1093, 1101, 1123, 1144, 1228, 1248, and 1249. A WD 14 repeat occupies 1132–1173 (GGSQPRAGTGYASPDRTHVLAAGKAEETLEAWRPPPPCLTSL). The WD 15 repeat unit spans residues 1255-1293 (SLGQELQAITTATTPSLDSEGQEPALRSWGNHEARANLR). Thr-1268 carries the post-translational modification Phosphothreonine. The tract at residues 1339–1377 (FRPSLPAPESPGLPAHPSNPQLPEARPGIPGGTASLLEP) is disordered.

As to quaternary structure, can form homodimers (via C-terminus). Interacts (via C-terminus) with MAPKBP1 (via C-terminus). Interacts with CDK5RAP2, CEP152, CEP63 and KIAA0753. CEP63, CDK5RAP2, CEP152, WDR62 are proposed to form a stepwise assembled complex at the centrosome forming a ring near parental centrioles. In terms of tissue distribution, present in fetal brain, enriched within the ventricular and subventricular zone (at protein level). In the embryonic brain it is expressed in mitotic neural precursor cells.

The protein localises to the nucleus. The protein resides in the cytoplasm. It is found in the cytoskeleton. Its subcellular location is the spindle pole. It localises to the microtubule organizing center. The protein localises to the centrosome. The protein resides in the centriole. Required for cerebral cortical development. Plays a role in neuronal proliferation and migration. Plays a role in mother-centriole-dependent centriole duplication; the function also seems to involve CEP152, CDK5RAP2 and CEP63 through a stepwise assembled complex at the centrosome that recruits CDK2 required for centriole duplication. The sequence is that of WD repeat-containing protein 62 (WDR62) from Homo sapiens (Human).